Reading from the N-terminus, the 518-residue chain is Endoglucanase 18 (518 aa).

Over 1–35 (MANCVRCCCWLLVLMLMALAITAAVVFVRYKNGEG) the chain is Cytoplasmic. The helical transmembrane segment at 36 to 56 (VFPFPGVPGAVDHKYADALAV) threads the bilayer. Residues 57-518 (ALQFFQVQKS…STSSLARSLS (462 aa)) lie on the Extracellular side of the membrane. Residue Asn71 is glycosylated (N-linked (GlcNAc...) asparagine). Catalysis depends on Asp101, which acts as the Nucleophile. N-linked (GlcNAc...) asparagine glycosylation is found at Asn214, Asn251, and Asn272. The active site involves His436. N-linked (GlcNAc...) asparagine glycosylation occurs at Asn477. Catalysis depends on residues Asp482 and Glu491.

Belongs to the glycosyl hydrolase 9 (cellulase E) family.

It is found in the membrane. It carries out the reaction Endohydrolysis of (1-&gt;4)-beta-D-glucosidic linkages in cellulose, lichenin and cereal beta-D-glucans.. In Oryza sativa subsp. japonica (Rice), this protein is Endoglucanase 18.